The primary structure comprises 417 residues: Glutamyl-tRNA(Gln) amidotransferase subunit D (417 aa).

One can recognise an Asparaginase/glutaminase domain in the interval 73 to 400 (EKVWLLATGG…EEVPRVLTTP (328 aa)). Active-site residues include Thr83, Thr157, Asp158, and Lys236.

The protein belongs to the asparaginase 1 family. GatD subfamily. As to quaternary structure, heterodimer of GatD and GatE.

The enzyme catalyses L-glutamyl-tRNA(Gln) + L-glutamine + ATP + H2O = L-glutaminyl-tRNA(Gln) + L-glutamate + ADP + phosphate + H(+). Allows the formation of correctly charged Gln-tRNA(Gln) through the transamidation of misacylated Glu-tRNA(Gln) in organisms which lack glutaminyl-tRNA synthetase. The reaction takes place in the presence of glutamine and ATP through an activated gamma-phospho-Glu-tRNA(Gln). The GatDE system is specific for glutamate and does not act on aspartate. The polypeptide is Glutamyl-tRNA(Gln) amidotransferase subunit D (Pyrobaculum aerophilum (strain ATCC 51768 / DSM 7523 / JCM 9630 / CIP 104966 / NBRC 100827 / IM2)).